A 664-amino-acid polypeptide reads, in one-letter code: DNA ligase (664 aa).

NAD(+) is bound by residues 30-34 (DFEFD), 79-80 (SL), and E109. Residue K111 is the N6-AMP-lysine intermediate of the active site. Residues R132, E169, K284, and K308 each contribute to the NAD(+) site. Positions 403, 406, 421, and 427 each coordinate Zn(2+). Residues 586–664 (NRSEKLKGLT…NEDAFLNMLE (79 aa)) enclose the BRCT domain.

This sequence belongs to the NAD-dependent DNA ligase family. LigA subfamily. The cofactor is Mg(2+). Requires Mn(2+) as cofactor.

The catalysed reaction is NAD(+) + (deoxyribonucleotide)n-3'-hydroxyl + 5'-phospho-(deoxyribonucleotide)m = (deoxyribonucleotide)n+m + AMP + beta-nicotinamide D-nucleotide.. In terms of biological role, DNA ligase that catalyzes the formation of phosphodiester linkages between 5'-phosphoryl and 3'-hydroxyl groups in double-stranded DNA using NAD as a coenzyme and as the energy source for the reaction. It is essential for DNA replication and repair of damaged DNA. This Parabacteroides distasonis (strain ATCC 8503 / DSM 20701 / CIP 104284 / JCM 5825 / NCTC 11152) protein is DNA ligase.